The primary structure comprises 355 residues: C-C chemokine receptor type 1 (355 aa).

Over 1–34 (METPNTTEDYDTTTEFDYGDATPCQKVNERAFGA) the chain is Extracellular. A glycan (N-linked (GlcNAc...) asparagine) is linked at N5. Cystine bridges form between C24-C273 and C106-C183. A helical transmembrane segment spans residues 35-60 (QLLPPLYSLVFVIGLVGNILVVLVLV). The Cytoplasmic segment spans residues 61 to 64 (QYKR). A helical transmembrane segment spans residues 65–91 (LKNMTSIYLLNLAISDLLFLFTLPFWI). Topologically, residues 92-107 (DYKLKDDWVFGDAMCK) are extracellular. Residues 108–129 (ILSGFYYTGLYSEIFFIILLTI) traverse the membrane as a helical segment. Topologically, residues 130–146 (DRYLAIVHAVFALRART) are cytoplasmic. The helical transmembrane segment at 147 to 171 (VTFGVITSIIIWALAILASMPGLYF) threads the bilayer. Residues 172–197 (SKTQWEFTHHTCSLHFPHESLREWKL) lie on the Extracellular side of the membrane. Residues 198–223 (FQALKLNLFGLVLPLLVMIICYTGII) form a helical membrane-spanning segment. Topologically, residues 224-239 (KILLRRPNEKKSKAVR) are cytoplasmic. Residues 240 to 264 (LIFVIMIIFFLFWTPYNLTILISVF) traverse the membrane as a helical segment. At 265–281 (QDFLFTHECEQSRHLDL) the chain is on the extracellular side. A helical membrane pass occupies residues 282–305 (AVQVTEVIAYTHCCVNPVIYAFVG). Residues 306–355 (ERFRKYLRQLFHRRVAVHLVKWLPFLSVDRLERVSSTSPSTGEHELSAGF) lie on the Cytoplasmic side of the membrane.

This sequence belongs to the G-protein coupled receptor 1 family. In terms of assembly, interacts with CREB3. Interacts with CCL3. Interacts with CCL15. Interacts with CCL23. Interacts with GNAI1. Interacts with PF4/CXCL4. In terms of tissue distribution, widely expressed in different hematopoietic cells.

The protein resides in the cell membrane. Chemokine receptor that plays a crucial role in regulating immune cell migration, inflammation, and immune responses. Contributes to the inflammatory response by recruiting immune cells, such as monocytes, macrophages, T-cells, and dendritic cells, to sites of inflammation for the clearance of pathogens and the resolution of tissue damage. When activated by its ligands including CCL3, CCL5-9, CCL13-16 and CCL23, triggers a signaling cascade within immune cells, leading to their migration towards the source of the chemokine. For example, mediates neutrophil migration after activation by CCL3 leading to the sequential release of TNF-alpha and leukotriene B4. Also mediates monocyte migration upon CXCL4 binding. Activation by CCL5 results in neuroinflammation through the ERK1/2 signaling pathway. The polypeptide is C-C chemokine receptor type 1 (CCR1) (Homo sapiens (Human)).